A 375-amino-acid polypeptide reads, in one-letter code: Growth/differentiation factor 8 (375 aa).

A signal peptide spans M1–L23. Residues N24–R266 constitute a propeptide that is removed on maturation. N48 and N71 each carry an N-linked (GlcNAc...) asparagine glycan. 4 cysteine pairs are disulfide-bonded: C272–C282, C281–C340, C309–C372, and C313–C374.

It belongs to the TGF-beta family. As to quaternary structure, homodimer; disulfide-linked. Interacts with WFIKKN2, leading to inhibit its activity. Interacts with FSTL3. In terms of processing, synthesized as large precursor molecule that undergoes proteolytic cleavage to generate an N-terminal propeptide and a disulfide linked C-terminal dimer, which is the biologically active molecule. The circulating form consists of a latent complex of the C-terminal dimer and other proteins, including its propeptide, which maintain the C-terminal dimer in a latent, inactive state. Ligand activation requires additional cleavage of the prodomain by a tolloid-like metalloproteinase.

The protein localises to the secreted. Its function is as follows. Acts specifically as a negative regulator of skeletal muscle growth. The chain is Growth/differentiation factor 8 (MSTN) from Ovis aries (Sheep).